A 291-amino-acid chain; its full sequence is Ribosome biogenesis protein BRX1 (291 aa).

The Brix domain occupies 31–232; that stretch reads QRTLLISSRG…VILILEGSFG (202 aa). A Phosphoserine modification is found at S285.

It belongs to the BRX1 family. Part of a complex that includes BRX1, RPF1, RPF2 and SSF1 or SSF2.

Its subcellular location is the nucleus. It is found in the nucleolus. Required for biogenesis of the 60S ribosomal subunit. In Saccharomyces cerevisiae (strain ATCC 204508 / S288c) (Baker's yeast), this protein is Ribosome biogenesis protein BRX1 (BRX1).